A 79-amino-acid polypeptide reads, in one-letter code: Conotoxin Tr6.2 (79 aa).

Residues Met-1–Ala-22 form the signal peptide. Positions Val-23–Arg-47 are excised as a propeptide. Disulfide bonds link Cys-49/Cys-62, Cys-56/Cys-67, and Cys-61/Cys-77. A 4-hydroxyproline mark is found at Pro-60 and Pro-63.

This sequence belongs to the conotoxin O1 superfamily. Expressed by the venom duct.

The protein localises to the secreted. Its function is as follows. Ion channel inhibitor that inhibits the increase in intracellular calcium upon depolarization in DRG neurons. In vivo, both intraperitoneal and intracranial injections into mice induce hyperactivity. This chain is Conotoxin Tr6.2, found in Conus terebra (Sea snail).